Here is a 164-residue protein sequence, read N- to C-terminus: Succinate dehydrogenase assembly factor 3, mitochondrial (164 aa).

The transit peptide at 1-51 directs the protein to the mitochondrion; that stretch reads MRPTLLRLANASGPLPLSVSQASVQLIPPIPLYRRLLRAHRLLPVDMRYMG. Basic and acidic residues predominate over residues 136–145; sequence KSPEQIEREA. Positions 136-164 are disordered; that stretch reads KSPEQIEREANSAGVSPVNPNDPTTAGNS. The span at 153–164 shows a compositional bias: polar residues; the sequence is VNPNDPTTAGNS.

It belongs to the complex I LYR family. SDHAF3 subfamily. As to quaternary structure, interacts with the iron-sulfur protein subunit within the SDH catalytic dimer.

Its subcellular location is the mitochondrion matrix. Functionally, plays an essential role in the assembly of succinate dehydrogenase (SDH), an enzyme complex (also referred to as respiratory complex II) that is a component of both the tricarboxylic acid (TCA) cycle and the mitochondrial electron transport chain, and which couples the oxidation of succinate to fumarate with the reduction of ubiquinone (coenzyme Q) to ubiquinol. Promotes maturation of the iron-sulfur protein subunit of the SDH catalytic dimer, protecting it from the deleterious effects of oxidants. May act together with SDHAF1. This chain is Succinate dehydrogenase assembly factor 3, mitochondrial, found in Cryptococcus neoformans var. neoformans serotype D (strain B-3501A) (Filobasidiella neoformans).